The following is a 418-amino-acid chain: Protease LasA (418 aa).

A signal peptide spans 1-31 (MQHKRSRAMASPRSPFLFVLLALAVGGTANA). Residues 32–236 (HDDGLPAFRY…ARQLQAKAAL (205 aa)) constitute a propeptide that is removed on maturation. The Zn(2+) site is built by H259 and D272. The cysteines at positions 301 and 347 are disulfide-linked. Active-site proton donor/acceptor residues include H317 and H356. H358 provides a ligand contact to Zn(2+). Cysteines 391 and 406 form a disulfide.

Belongs to the peptidase M23A family. Requires Zn(2+) as cofactor. In terms of processing, processing of pro-LasA can occur extracellularly and requires elastase (lasB). Secretion and processing may be linked.

Its subcellular location is the secreted. In terms of biological role, involved in proteolysis and elastolysis (degradation of the host protein elastin). Has staphylolytic activity (degrades pentaglycine cross-links in cell wall peptidoglycan), preferring Gly-Gly-|-X substrates where X is Ala or Gly. Enhances the elastolytic but not proteolytic activity of elastase (lasB) and elastolytic activity of other proteases. Degradation of host elastin is likely to contribute to the pathogenicity of P.aeruginosa. While either His-317 or His-356 can abstract a proton in the hydrolysis reaction, the same residue performs both functions in a given catalytic cycle, with the other stabilizing the catalytic intermediate. In Pseudomonas aeruginosa (strain ATCC 15692 / DSM 22644 / CIP 104116 / JCM 14847 / LMG 12228 / 1C / PRS 101 / PAO1), this protein is Protease LasA (lasA).